The sequence spans 217 residues: Probable transaldolase (217 aa).

Residue Lys85 is the Schiff-base intermediate with substrate of the active site.

Belongs to the transaldolase family. Type 3B subfamily.

Its subcellular location is the cytoplasm. It carries out the reaction D-sedoheptulose 7-phosphate + D-glyceraldehyde 3-phosphate = D-erythrose 4-phosphate + beta-D-fructose 6-phosphate. It participates in carbohydrate degradation; pentose phosphate pathway; D-glyceraldehyde 3-phosphate and beta-D-fructose 6-phosphate from D-ribose 5-phosphate and D-xylulose 5-phosphate (non-oxidative stage): step 2/3. Functionally, transaldolase is important for the balance of metabolites in the pentose-phosphate pathway. The polypeptide is Probable transaldolase (Brachyspira hyodysenteriae (strain ATCC 49526 / WA1)).